Reading from the N-terminus, the 94-residue chain is ESAT-6-like protein EsxN (94 aa).

It belongs to the WXG100 family. ESAT-6 subfamily.

It is found in the secreted. In Mycobacterium bovis (strain ATCC BAA-935 / AF2122/97), this protein is ESAT-6-like protein EsxN.